The following is a 210-amino-acid chain: 3,4-dihydroxy-2-butanone 4-phosphate synthase (210 aa).

Residues 33 to 34, D38, 146 to 150, and E170 each bind D-ribulose 5-phosphate; these read RE and RRGHT. E34 provides a ligand contact to Mg(2+). Position 149 (H149) interacts with Mg(2+).

It belongs to the DHBP synthase family. As to quaternary structure, homodimer. Mg(2+) is required as a cofactor. It depends on Mn(2+) as a cofactor.

The enzyme catalyses D-ribulose 5-phosphate = (2S)-2-hydroxy-3-oxobutyl phosphate + formate + H(+). It functions in the pathway cofactor biosynthesis; riboflavin biosynthesis; 2-hydroxy-3-oxobutyl phosphate from D-ribulose 5-phosphate: step 1/1. In terms of biological role, catalyzes the conversion of D-ribulose 5-phosphate to formate and 3,4-dihydroxy-2-butanone 4-phosphate. The polypeptide is 3,4-dihydroxy-2-butanone 4-phosphate synthase (Chromobacterium violaceum (strain ATCC 12472 / DSM 30191 / JCM 1249 / CCUG 213 / NBRC 12614 / NCIMB 9131 / NCTC 9757 / MK)).